The sequence spans 433 residues: Dihydrolipoyllysine-residue acetyltransferase component of pyruvate dehydrogenase complex (433 aa).

One can recognise a Lipoyl-binding domain in the interval 2-77; sequence AFEFRLPDIG…VVGDVIVKID (76 aa). At K43 the chain carries N6-lipoyllysine. Disordered regions lie at residues 80–134 and 164–204; these read DAEE…PSVR and YLNG…FPET. 2 stretches are compositionally biased toward basic and acidic residues: residues 84–103 and 117–126; these read MQFK…KEQE and EKTEVDESKT. The Peripheral subunit-binding (PSBD) domain maps to 128–165; sequence KAMPSVRKYARENGVNIKAVNGSGKNGRITKEDIDAYL. Positions 166-188 are enriched in low complexity; the sequence is NGGSSEEGSNTSVASESTSSDVV. H404 is a catalytic residue.

The protein belongs to the 2-oxoacid dehydrogenase family. As to quaternary structure, forms a 24-polypeptide structural core with octahedral symmetry. (R)-lipoate serves as cofactor.

It catalyses the reaction N(6)-[(R)-dihydrolipoyl]-L-lysyl-[protein] + acetyl-CoA = N(6)-[(R)-S(8)-acetyldihydrolipoyl]-L-lysyl-[protein] + CoA. The pyruvate dehydrogenase complex catalyzes the overall conversion of pyruvate to acetyl-CoA and CO(2). It contains multiple copies of three enzymatic components: pyruvate dehydrogenase (E1), dihydrolipoamide acetyltransferase (E2) and lipoamide dehydrogenase (E3). The chain is Dihydrolipoyllysine-residue acetyltransferase component of pyruvate dehydrogenase complex (pdhC) from Staphylococcus epidermidis (strain ATCC 12228 / FDA PCI 1200).